Consider the following 455-residue polypeptide: Acid sphingomyelinase-like phosphodiesterase 3b (455 aa).

The first 18 residues, 1-18 (MRLLAWLIFLANWGGARA), serve as a signal peptide directing secretion. Residues aspartate 28 and histidine 30 each contribute to the Zn(2+) site. The cysteines at positions 45 and 64 are disulfide-linked. An N-linked (GlcNAc...) asparagine glycan is attached at asparagine 72. Aspartate 93 and asparagine 134 together coordinate Zn(2+). A glycan (N-linked (GlcNAc...) asparagine) is linked at asparagine 164. Histidine 236, histidine 277, and histidine 279 together coordinate Zn(2+). Asparagine 343 is a glycosylation site (N-linked (GlcNAc...) asparagine). Disulfide bonds link cysteine 405–cysteine 409 and cysteine 415–cysteine 428.

The protein belongs to the acid sphingomyelinase family. As to quaternary structure, interacts with TLR4, TLR7, TLR8 and TLR9. The cofactor is Zn(2+). In terms of processing, N-glycosylated.

The protein resides in the secreted. It localises to the cell membrane. Its function is as follows. Lipid-modulating phosphodiesterase. Active on the surface of macrophages and dendritic cells and strongly influences macrophage lipid composition and membrane fluidity. Acts as a negative regulator of Toll-like receptor signaling. Has in vitro phosphodiesterase activity, but the physiological substrate is unknown. Lacks activity with phosphocholine-containing lipids, but can cleave CDP-choline, and can release phosphate from ATP and ADP (in vitro). The protein is Acid sphingomyelinase-like phosphodiesterase 3b (SMPDL3B) of Homo sapiens (Human).